The chain runs to 155 residues: Small ribosomal subunit protein uS9 (155 aa).

It belongs to the universal ribosomal protein uS9 family.

This is Small ribosomal subunit protein uS9 from Sinorhizobium medicae (strain WSM419) (Ensifer medicae).